The following is a 225-amino-acid chain: C-reactive protein (225 aa).

A signal peptide spans 1–19 (MEKLLWCLLIMISFSRTFG). Residues 24–225 (FKKAFVFPKE…DVFIKPQLWS (202 aa)) enclose the Pentraxin (PTX) domain. Cysteines 55 and 116 form a disulfide. Residues N80, E157, Q158, D159, and Q169 each contribute to the Ca(2+) site.

Belongs to the pentraxin family. As to quaternary structure, homopentamer. Pentraxin (or pentaxin) have a discoid arrangement of 5 non-covalently bound subunits. Interacts with FCN1; may regulate monocyte activation by FCN1. Ca(2+) is required as a cofactor. In terms of tissue distribution, found in plasma.

It localises to the secreted. Functionally, displays several functions associated with host defense: it promotes agglutination, bacterial capsular swelling, phagocytosis and complement fixation through its calcium-dependent binding to phosphorylcholine. Can interact with DNA and histones and may scavenge nuclear material released from damaged circulating cells. The protein is C-reactive protein (Crp) of Mus musculus (Mouse).